We begin with the raw amino-acid sequence, 619 residues long: Polyadenylate-binding protein 1-like (619 aa).

RRM domains lie at 11 to 89 (ASLY…WSQR), 99 to 175 (GNIF…HFKS), 191 to 268 (TNIY…RAQK), and 294 to 370 (VNLY…LAQR). Residues 431 to 458 (PAPRWTSQPPRPSSAYPPGASMVRPPVV) form a disordered region. The region spanning 533-610 (QEPLTASMLA…AVAVLQAHQA (78 aa)) is the PABC domain.

Belongs to the polyadenylate-binding protein type-1 family. In terms of tissue distribution, expressed in ovary and testis. Also expressed in pancreas, liver and thymus, and at lower levels in other somatic tissues including brain and lung.

It localises to the cytoplasm. Poly(A)-binding protein involved in oocyte maturation and early embryo development. It is required for cytosolic mRNA polyadenylation and translational activation of maternally stored mRNA in oocytes. The polypeptide is Polyadenylate-binding protein 1-like (Homo sapiens (Human)).